A 258-amino-acid polypeptide reads, in one-letter code: Ciliogenesis and planar polarity effector 2 (258 aa).

A small GTPase-like region spans residues 50–258 (SIDTASYKIF…LPNPPESAPE (209 aa)). GTP-binding residues include S64, G65, G67, K68, T69, A70, V82, H84, T87, K176, D178, and S206.

The protein belongs to the small GTPase superfamily. Rab family. In terms of assembly, interacts with FUZ. Associates with the CPLANE (ciliogenesis and planar polarity effectors) complex via its interaction with FUZ.

The protein localises to the cytoplasm. The protein resides in the cytoskeleton. It is found in the cilium basal body. It localises to the microtubule organizing center. Its subcellular location is the centrosome. The protein localises to the centriole. In terms of biological role, required for efficient primary cilia initiation, regulating a late step in cilia initiation. Plays a role in the final maturation of the mother centriole and ciliary vesicle that allows extension of the ciliary axoneme. This chain is Ciliogenesis and planar polarity effector 2, found in Homo sapiens (Human).